A 461-amino-acid polypeptide reads, in one-letter code: MEKCSHESGRHSAENDGKYDITGSTATNVVDGFTMVAVGDVIVSRALANGHHPGFSEIVELLRAADVTFGNMETLIFDIRSFNGTPQAEYGGAYHVSLPEIGPDLKAMGFNIMGRANNHSLDWGVEGMRETSRILDESGIIHAGVGESRAQASAARLLETARGRVALLSCATSFTPMSRACDPAGEAPARPGVNALRLERSVVVEPDMLESLRKIRDALPNPGPKHDDREMLVLAGTTYRTGKDVGYTYAANTRDLADILRNVRRGKQYSDFCIFTNHAHEPGNWSEEPADFEQALARKLIDAGADAYVGHGPHRLRGIEIYKRRPIFYSLGNFFYDDLRTPVGADMYDVYDKDPQVDTDAEVTAAEETMGYPTAAGFIGALAEPVYYESVVAVSRFEENQLAELRLYPIELGYSKRLANRGVPSLAPRPQAISILERLQRLSEPFGTRITIEDRVGLIRL.

The span at 1–19 (MEKCSHESGRHSAENDGKY) shows a compositional bias: basic and acidic residues. The disordered stretch occupies residues 1-21 (MEKCSHESGRHSAENDGKYDI).

It belongs to the CapA family.

In terms of biological role, could be involved in the biosynthesis of a cell wall component. This is an uncharacterized protein from Sinorhizobium fredii (strain NBRC 101917 / NGR234).